Consider the following 499-residue polypeptide: Importin subunit alpha-8 (499 aa).

In terms of domain architecture, IBB spans 1 to 57; the sequence is MATSKAPKERLKNYKYRGKEMSLPRQQRIASSLQLRKTRKDEQVLKRRNIDLFSSDM. 8 ARM repeats span residues 101–141, 144–183, 186–226, 229–268, 271–310, 313–352, 354–393, and 397–436; these read TPPL…NIAS, SEQT…NIAG, AEFR…NLCR, DPYP…YLTK, KEYI…NIVA, DEQT…NVAA, PRHQ…NIAT, and QDQL…YLLQ.

It belongs to the importin alpha family. In terms of assembly, binds to importin subunit beta-1/KPNB1 via the IBB domain; this complex dissociates in the presence of RAN-GTP. Shows a limited binding to the RB1 nuclear localization signal (NLS), but not to the SV40, nor NPM1 NLSs. Interacts with RSL1D1. Expressed predominantly in ovary. Isoform 1 is the predominant form.

The protein resides in the nucleus. In terms of biological role, functions in nuclear protein import. This is Importin subunit alpha-8 (Kpna7) from Mus musculus (Mouse).